Consider the following 161-residue polypeptide: Phosphopantetheine adenylyltransferase (161 aa).

A substrate-binding site is contributed by Thr9. Residues 9–10 and His17 contribute to the ATP site; that span reads TF. Positions 41, 73, and 87 each coordinate substrate. ATP-binding positions include 88–90, Glu98, and 123–129; these read GLR and YQFISGT.

It belongs to the bacterial CoaD family. Homohexamer. Requires Mg(2+) as cofactor.

Its subcellular location is the cytoplasm. The enzyme catalyses (R)-4'-phosphopantetheine + ATP + H(+) = 3'-dephospho-CoA + diphosphate. It participates in cofactor biosynthesis; coenzyme A biosynthesis; CoA from (R)-pantothenate: step 4/5. Functionally, reversibly transfers an adenylyl group from ATP to 4'-phosphopantetheine, yielding dephospho-CoA (dPCoA) and pyrophosphate. This is Phosphopantetheine adenylyltransferase from Janthinobacterium sp. (strain Marseille) (Minibacterium massiliensis).